We begin with the raw amino-acid sequence, 370 residues long: Allatostatins (370 aa).

The first 27 residues, 1–27 (MSGPRTCFCLPSALVLVLLSLSTSALG), serve as a signal peptide directing secretion. Positions 28–65 (TAPEPSGVHEESPAGGGTDLLPHPEDLSASDNPDLEFV) are excised as a propeptide. The segment at 29-58 (APEPSGVHEESPAGGGTDLLPHPEDLSASD) is disordered. 4 positions are modified to leucine amide: leucine 73, leucine 94, leucine 105, and leucine 117. A propeptide spanning residues 121–151 (DYDYYGEEDEDDQQAIGDEDIEESDVGDLMD) is cleaved from the precursor. A leucine amide mark is found at leucine 161, leucine 172, leucine 188, leucine 200, leucine 213, and leucine 232. Residues 236–251 (SDDIDFRELEEKFAED) constitute a propeptide that is removed on maturation. Leucine 264 bears the Leucine amide mark. Positions 268-345 (EVEPSELEAV…ITPEEFSRMV (78 aa)) are excised as a propeptide. Residues 273–298 (ELEAVRNEEKDNSSVHDKKNNTNDMH) are disordered. Residue leucine 353 is modified to Leucine amide. Position 364 is an isoleucine amide (isoleucine 364). Positions 368–370 (SER) are excised as a propeptide.

This sequence belongs to the allatostatin family. As to expression, brain, subesophageal ganglion and corpus allatum.

The protein localises to the secreted. Its function is as follows. Neuropeptide inhibitors of juvenile hormone synthesis and gut muscle contraction. This chain is Allatostatins, found in Diploptera punctata (Pacific beetle cockroach).